Consider the following 184-residue polypeptide: UPF0301 protein RHOS4_26140 (184 aa).

It belongs to the UPF0301 (AlgH) family.

The chain is UPF0301 protein RHOS4_26140 from Cereibacter sphaeroides (strain ATCC 17023 / DSM 158 / JCM 6121 / CCUG 31486 / LMG 2827 / NBRC 12203 / NCIMB 8253 / ATH 2.4.1.) (Rhodobacter sphaeroides).